A 465-amino-acid polypeptide reads, in one-letter code: uncharacterized protein (465 aa).

Disordered stretches follow at residues 95 to 173 (STST…RKDP), 407 to 426 (QEME…KSDK), and 443 to 465 (ANPI…SSKK). The span at 118–137 (KTGSKKVTRSKKSKKTKRRS) shows a compositional bias: basic residues. Residues 138–150 (STTVTTTTISNSK) are compositionally biased toward low complexity. Residues 153–173 (TPDKDKDSKDQRKQRTKRKDP) show a composition bias toward basic and acidic residues. Over residues 451-465 (MARRNRRSKGSSSKK) the composition is skewed to basic residues.

This is an uncharacterized protein from Caenorhabditis elegans.